Here is a 244-residue protein sequence, read N- to C-terminus: MRMAGQDNIFAAPIEKLGDFTFDQKVAEVFPDMIQRSVPGYSNIISAIGMLAERFAKPHSKIYDLGCSLGAATLSMRRSIQQEGCEIIAVDNSAAMVERCRLHIDAYRSDTPVQVVEADIRNIDIADASVVVLNFTLQFLVPEDRQMLLEKIYAGLRPGGILILSEKYIFDDEQAHELLINLHHDFKRANGYSELEISQKRSAIENVMRPDSIDTHKKRLTEIGFSSTEVWFQCFNFGSMFAIK.

S-adenosyl-L-methionine is bound by residues Tyr41, 66–68 (GCS), 91–92 (DN), 119–120 (DI), Asn134, and Arg201.

It belongs to the class I-like SAM-binding methyltransferase superfamily. Cx-SAM synthase family. As to quaternary structure, homodimer.

The catalysed reaction is prephenate + S-adenosyl-L-methionine = carboxy-S-adenosyl-L-methionine + 3-phenylpyruvate + H2O. Functionally, catalyzes the conversion of S-adenosyl-L-methionine (SAM) to carboxy-S-adenosyl-L-methionine (Cx-SAM). The protein is Carboxy-S-adenosyl-L-methionine synthase of Photobacterium profundum (strain SS9).